The chain runs to 274 residues: MAAGFFQAEMSILSSTLARSYSLPIRKTLMTFDFRIAMQRNPCLRIRRSCVAAFSSTPSHSRNFPIRGLEDVFVGYLFGRKKATEVAHVVWEQVIQKGDTVIDATCGNGNDTLAMLKMVMHDSVGCGGYVYAMDIQKDAIESTSSLLDQAVGSKEKECVKLFNLCHSKMGEIVPENARVRMVAFNLGYLPGGNKSIITLSDTTLSALKAAERILKPGGLISLVVYIGHPGGREELEVVEAFGSGLPVSDWICCKFQMLNRPLAPVLVFMFKREN.

A chloroplast-targeting transit peptide spans 1–50 (MAAGFFQAEMSILSSTLARSYSLPIRKTLMTFDFRIAMQRNPCLRIRRSC). Residues asparagine 108, asparagine 110, aspartate 134, glutamine 136, and histidine 166 each contribute to the S-adenosyl-L-methionine site.

This sequence belongs to the methyltransferase superfamily. MnmM family.

The protein resides in the plastid. The protein localises to the chloroplast. The catalysed reaction is 5-aminomethyl-2-thiouridine(34) in tRNA + S-adenosyl-L-methionine = 5-methylaminomethyl-2-thiouridine(34) in tRNA + S-adenosyl-L-homocysteine + H(+). The protein operates within tRNA modification. Involved in the biosynthesis of 5-methylaminomethyl-2-thiouridine (mnm(5)s(2)U) at the wobble position (U34) in tRNA. Catalyzes the transfer of a methyl group from S-adenosyl-L-methionine to nm(5)s(2)U34 to form mnm(5)s(2)U34. This Arabidopsis thaliana (Mouse-ear cress) protein is tRNA (mnm(5)s(2)U34)-methyltransferase, chloroplastic.